A 912-amino-acid chain; its full sequence is Collagen alpha-2(I) chain (912 aa).

The span at 1-41 (GPMGIMGPRGPPGASGAPGPQGFQGPAGEPGEPGQTGPAGA) shows a compositional bias: low complexity. 3 disordered regions span residues 1–206 (GPMG…GITG), 222–739 (IPGP…GIIG), and 763–912 (GPPG…RGSQ). Positions 43 to 57 (AGEDGHPGKPGRPGE) are enriched in basic and acidic residues. 6 stretches are compositionally biased toward low complexity: residues 124 to 153 (VGAPGPAGARGSDGSVGPVGPAGPIGSAGP), 178 to 192 (AGPRGEVGIPGISGP), 229 to 244 (PGPAGAAGATGARGIV), 295 to 327 (PGIRGIPGADGRAGVMGPAGSRGASGPAGVRGP), 360 to 382 (PVGIPGIDGRPGPIGPAGARGEP), and 406 to 424 (AGIAGARGAPGPDGNNGAQ). The span at 431–440 (GVQGGKGEQG) shows a compositional bias: gly residues. 2 stretches are compositionally biased toward low complexity: residues 474–501 (IPGPAGARGPPGESGAAGPAGPIGSRGP) and 517–532 (IGAPGTAGPSGPSGIP). Residues 539–548 (GIPGGKGEIG) show a composition bias toward gly residues. 2 stretches are compositionally biased toward low complexity: residues 549–612 (NPGR…QPGA) and 622–637 (NGPVGPTGPVGAAGPS). The segment covering 647 to 656 (GSRGDGGPPG) has biased composition (gly residues). 5 stretches are compositionally biased toward low complexity: residues 658 to 667 (TGFPGAAGRT), 728 to 739 (PQGIIGAPGIIG), 763 to 785 (GPPGARGPPGAVGAPGVNGAPGE), 805 to 815 (NAGPVGAVGAP), and 830 to 850 (PGPVGSVGPVGAVGPRGPSGP).

This sequence belongs to the fibrillar collagen family. As to quaternary structure, trimers of one alpha 2(I) and two alpha 1(I) chains. Interacts (via C-terminus) with TMEM131 (via PapD-L domain); the interaction is direct and is involved in assembly and TRAPPIII ER-to-Golgi transport complex-dependent secretion of collagen. Post-translationally, prolines at the third position of the tripeptide repeating unit (G-X-Y) are hydroxylated in some or all of the chains. As to expression, forms the fibrils of tendon, ligaments and bones. In bones, the fibrils are mineralized with calcium hydroxyapatite.

The protein resides in the secreted. It is found in the extracellular space. The protein localises to the extracellular matrix. In terms of biological role, type I collagen is a member of group I collagen (fibrillar forming collagen). This Equus sp protein is Collagen alpha-2(I) chain.